The sequence spans 221 residues: MLRATFTGSSYVGVFARAIDDLLLVRPDVDEELADALGEELGAEPLLTTVGGANTVGSLATGNENGVLVSARATEREQSRIAEAADCEVGELPGEINAAGNVVLANDYGAYVHPDLPRESIVTIRETLGVPVVRGDLGDVRTVGTAAVANNTGVLCHPKSTESELQAVEEALDVRADLGTINYGAPLIGSGLIATDEGYVVGEDTTGPELGRIEETLGFID.

The protein belongs to the eIF-6 family.

Binds to the 50S ribosomal subunit and prevents its association with the 30S ribosomal subunit to form the 70S initiation complex. The sequence is that of Translation initiation factor 6 from Halorubrum lacusprofundi (strain ATCC 49239 / DSM 5036 / JCM 8891 / ACAM 34).